The primary structure comprises 35 residues: Photosystem II reaction center protein M (35 aa).

A helical transmembrane segment spans residues isoleucine 5–leucine 25.

It belongs to the PsbM family. PSII is composed of 1 copy each of membrane proteins PsbA, PsbB, PsbC, PsbD, PsbE, PsbF, PsbH, PsbI, PsbJ, PsbK, PsbL, PsbM, PsbT, PsbX, PsbY, PsbZ, Psb30/Ycf12, at least 3 peripheral proteins of the oxygen-evolving complex and a large number of cofactors. It forms dimeric complexes.

The protein resides in the plastid. The protein localises to the chloroplast thylakoid membrane. Functionally, one of the components of the core complex of photosystem II (PSII). PSII is a light-driven water:plastoquinone oxidoreductase that uses light energy to abstract electrons from H(2)O, generating O(2) and a proton gradient subsequently used for ATP formation. It consists of a core antenna complex that captures photons, and an electron transfer chain that converts photonic excitation into a charge separation. This subunit is found at the monomer-monomer interface. The protein is Photosystem II reaction center protein M of Staurastrum punctulatum (Green alga).